The chain runs to 317 residues: Metaxin-1 (317 aa).

Glycyl lysine isopeptide (Lys-Gly) (interchain with G-Cter in ubiquitin) cross-links involve residues Lys38, Lys41, and Lys78. Residues 164 to 184 (EELEKELYQEAQECLTLLSQR) form a helical membrane-spanning segment.

The protein belongs to the metaxin family. In terms of assembly, interacts with MTX2/metaxin-2. Associates with the mitochondrial contact site and cristae organizing system (MICOS) complex, composed of at least MICOS10/MIC10, CHCHD3/MIC19, CHCHD6/MIC25, APOOL/MIC27, IMMT/MIC60, APOO/MIC23/MIC26 and QIL1/MIC13. This complex was also known under the names MINOS or MitOS complex. The MICOS complex associates with mitochondrial outer membrane proteins SAMM50, MTX1 and MTX2 (together described as components of the mitochondrial outer membrane sorting assembly machinery (SAM) complex) and DNAJC11, mitochondrial inner membrane protein TMEM11 and with HSPA9. The MICOS and SAM complexes together with DNAJC11 are part of a large protein complex spanning both membranes termed the mitochondrial intermembrane space bridging (MIB) complex. Interacts with ARMC1. Post-translationally, ubiquitinated by PRKN during mitophagy, leading to its degradation and enhancement of mitophagy. Deubiquitinated by USP30.

The protein localises to the mitochondrion outer membrane. Its function is as follows. Involved in transport of proteins into the mitochondrion. Essential for embryonic development. The polypeptide is Metaxin-1 (MTX1) (Bos taurus (Bovine)).